The chain runs to 476 residues: MAIKFLEVIKPFCAVLPEIQKPERKIQFREKVLWTAITLFIFLVCCQIPLFGIMSSDSADPFYWMRVILASNRGTLMELGISPIVTSGLIMQLLAGAKIIEVGDTPKDRALFNGAQKLFGMIITIGQAIVYVMTGMYGDPSEMGAGICLLIIIQLFVAGLIVLLLDELLQKGYGLGSGISLFIATNICETIVWKAFSPTTVNTGRGTEFEGAIIALFHLLATRTDKVRALREAFYRQNLPNLMNLIATVFVFAVVIYFQGFRVDLPIKSARYRGQYNTYPIKLFYTSNIPIILQSALVSNLYVISQMLSTRFSGNFLVNLLGTWSDTSSGGPARAYPVGGLCYYLSPPESFGSVLDDPVHAVIYIVFMLGSCAFFSKTWIEVSGSSAKDVAKQLKEQQMVMRGHRETSMVHELNRYIPTAAAFGGLCIGGLSVMADFLGAIGSGTGILLAVTIIYQYFEIFVKEQSEVGSMGALLF.

At 2 to 33 (AIKFLEVIKPFCAVLPEIQKPERKIQFREKVL) the chain is on the cytoplasmic side. A helical membrane pass occupies residues 34–53 (WTAITLFIFLVCCQIPLFGI). Topologically, residues 54–76 (MSSDSADPFYWMRVILASNRGTL) are lumenal. Residues 77–96 (MELGISPIVTSGLIMQLLAG) traverse the membrane as a helical segment. The Cytoplasmic segment spans residues 97-117 (AKIIEVGDTPKDRALFNGAQK). Residues 118–138 (LFGMIITIGQAIVYVMTGMYG) traverse the membrane as a helical segment. The Lumenal portion of the chain corresponds to 139–144 (DPSEMG). A helical membrane pass occupies residues 145-165 (AGICLLIIIQLFVAGLIVLLL). The Cytoplasmic portion of the chain corresponds to 166–172 (DELLQKG). Residues 173-193 (YGLGSGISLFIATNICETIVW) form a helical membrane-spanning segment. Topologically, residues 194–240 (KAFSPTTVNTGRGTEFEGAIIALFHLLATRTDKVRALREAFYRQNLP) are lumenal. Residues 241–261 (NLMNLIATVFVFAVVIYFQGF) form a helical membrane-spanning segment. Over 262 to 288 (RVDLPIKSARYRGQYNTYPIKLFYTSN) the chain is Cytoplasmic. Residues 289 to 309 (IPIILQSALVSNLYVISQMLS) form a helical membrane-spanning segment. The Lumenal segment spans residues 310 to 354 (TRFSGNFLVNLLGTWSDTSSGGPARAYPVGGLCYYLSPPESFGSV). A helical membrane pass occupies residues 355–375 (LDDPVHAVIYIVFMLGSCAFF). Residues 376 to 420 (SKTWIEVSGSSAKDVAKQLKEQQMVMRGHRETSMVHELNRYIPTA) lie on the Cytoplasmic side of the membrane. The helical transmembrane segment at 421–441 (AAFGGLCIGGLSVMADFLGAI) threads the bilayer. Over 442 to 445 (GSGT) the chain is Lumenal. A helical membrane pass occupies residues 446–462 (GILLAVTIIYQYFEIFV). Residues 463–476 (KEQSEVGSMGALLF) are Cytoplasmic-facing.

This sequence belongs to the SecY/SEC61-alpha family. The SEC61 channel-forming translocon complex consists of channel-forming core components SEC61A1, SEC61B and SEC61G and different auxiliary components such as SEC62 and SEC63. The SEC61 channel associates with the multi-pass translocon (MPT) complex.

The protein resides in the endoplasmic reticulum membrane. Its function is as follows. Component of SEC61 channel-forming translocon complex that mediates transport of signal peptide-containing precursor polypeptides across the endoplasmic reticulum (ER). Forms a ribosome receptor and a gated pore in the ER membrane, both functions required for cotranslational translocation of nascent polypeptides. May cooperate with auxiliary protein SEC62, SEC63 and HSPA5/BiP to enable post-translational transport of small presecretory proteins. The SEC61 channel is also involved in ER membrane insertion of transmembrane proteins: it mediates membrane insertion of the first few transmembrane segments of proteins, while insertion of subsequent transmembrane regions of multi-pass membrane proteins is mediated by the multi-pass translocon (MPT) complex. Plays a role in the pronephric kidney tubule development. The sequence is that of Protein transport protein Sec61 subunit alpha-like 1 (sec61al1) from Danio rerio (Zebrafish).